Here is a 336-residue protein sequence, read N- to C-terminus: Probable carboxylesterase 6 (336 aa).

The segment at 1–20 (MGGTKLTHVTTTNPNNSNIH) is disordered. Positions 7-19 (THVTTTNPNNSNI) are enriched in polar residues. The short motif at 96–98 (HGG) is the Involved in the stabilization of the negatively charged intermediate by the formation of the oxyanion hole element. Active-site residues include Ser176, Asp276, and His303.

Belongs to the 'GDXG' lipolytic enzyme family. As to expression, expressed in roots, leaves, flowers and siliques.

The enzyme catalyses a carboxylic ester + H2O = an alcohol + a carboxylate + H(+). In terms of biological role, carboxylesterase acting on esters with varying acyl chain length. This is Probable carboxylesterase 6 (CXE6) from Arabidopsis thaliana (Mouse-ear cress).